The primary structure comprises 264 residues: Tryptophan synthase alpha chain (264 aa).

Residues glutamate 49 and aspartate 60 each act as proton acceptor in the active site.

The protein belongs to the TrpA family. As to quaternary structure, tetramer of two alpha and two beta chains.

It catalyses the reaction (1S,2R)-1-C-(indol-3-yl)glycerol 3-phosphate + L-serine = D-glyceraldehyde 3-phosphate + L-tryptophan + H2O. The protein operates within amino-acid biosynthesis; L-tryptophan biosynthesis; L-tryptophan from chorismate: step 5/5. The alpha subunit is responsible for the aldol cleavage of indoleglycerol phosphate to indole and glyceraldehyde 3-phosphate. This is Tryptophan synthase alpha chain from Laribacter hongkongensis (strain HLHK9).